The chain runs to 523 residues: Butyrophilin subfamily 2 member A2 (523 aa).

A signal peptide spans 1–32 (MEPAAALHFSLPASLLLLLLLLLLSLCALVSA). At 33–265 (QFTVVGPANP…AVILTASPWM (233 aa)) the chain is on the extracellular side. The Ig-like V-type domain occupies 34–145 (FTVVGPANPI…SYDEAILRLV (112 aa)). N-linked (GlcNAc...) asparagine glycosylation is found at N50, N118, N220, and N226. C55 and C129 are disulfide-bonded. The Ig-like C2-type domain maps to 153–234 (PLIEIKAQED…VNNTLLGQEK (82 aa)). A helical transmembrane segment spans residues 266–286 (VSMTVILAVFIIFMAVSICCI). Residues 286-321 (IKKLQREKKILSGEKKVEQEEKEIAQQLQEELRWRR) are a coiled coil. Topologically, residues 287-523 (KKLQREKKIL…LHRVGTHQSL (237 aa)) are cytoplasmic. The region spanning 309 to 502 (IAQQLQEELR…IFICPALTGA (194 aa)) is the B30.2/SPRY domain.

It belongs to the immunoglobulin superfamily. BTN/MOG family. N-glycosylated. Highly expressed in brain, bone marrow, small intestine, muscle, spleen and pancreas. Moderate expression was seen in lung, liver and kidney.

Its subcellular location is the membrane. In terms of biological role, inhibits the proliferation of CD4 and CD8 T-cells activated by anti-CD3 antibodies, T-cell metabolism and IL2 and IFNG secretion. In Homo sapiens (Human), this protein is Butyrophilin subfamily 2 member A2 (BTN2A2).